A 280-amino-acid polypeptide reads, in one-letter code: MNNIIDVKNLTYKYANSGDKKALDNVSLSIEKGSWTSIVGHNGSGKSTLARSIDGLMSYNEGVINVDGIILSDDTVWDIRKKIGMIFQNPDNQFVGATVEDDVAFGLENLGIETDKMHKIVNNVLKKVRMEDFKERQPDQLSGGQKQRVAIAGVLASKPEIIILDEATSMLDPQGRYEIINLINEIHQENDITVISITHDVSEAMLSDHVIVLNDGKIVESGAPKKVFNDDEMLKLTGLEKPFNAHLFDALVEQGIHPPVELRMDENDLEEWLCQLLLKA.

In terms of domain architecture, ABC transporter spans 5 to 240 (IDVKNLTYKY…DEMLKLTGLE (236 aa)). 40–47 (GHNGSGKS) lines the ATP pocket.

It belongs to the ABC transporter superfamily. Energy-coupling factor EcfA family. In terms of assembly, forms a stable energy-coupling factor (ECF) transporter complex composed of 2 membrane-embedded substrate-binding proteins (S component), 2 ATP-binding proteins (A component) and 2 transmembrane proteins (T component).

The protein localises to the cell membrane. Functionally, ATP-binding (A) component of a common energy-coupling factor (ECF) ABC-transporter complex. Unlike classic ABC transporters this ECF transporter provides the energy necessary to transport a number of different substrates. This chain is Energy-coupling factor transporter ATP-binding protein EcfA, found in Pediococcus pentosaceus (strain ATCC 25745 / CCUG 21536 / LMG 10740 / 183-1w).